A 571-amino-acid chain; its full sequence is Proline--tRNA ligase (571 aa).

The protein belongs to the class-II aminoacyl-tRNA synthetase family. ProS type 1 subfamily. As to quaternary structure, homodimer.

Its subcellular location is the cytoplasm. It carries out the reaction tRNA(Pro) + L-proline + ATP = L-prolyl-tRNA(Pro) + AMP + diphosphate. Functionally, catalyzes the attachment of proline to tRNA(Pro) in a two-step reaction: proline is first activated by ATP to form Pro-AMP and then transferred to the acceptor end of tRNA(Pro). As ProRS can inadvertently accommodate and process non-cognate amino acids such as alanine and cysteine, to avoid such errors it has two additional distinct editing activities against alanine. One activity is designated as 'pretransfer' editing and involves the tRNA(Pro)-independent hydrolysis of activated Ala-AMP. The other activity is designated 'posttransfer' editing and involves deacylation of mischarged Ala-tRNA(Pro). The misacylated Cys-tRNA(Pro) is not edited by ProRS. The protein is Proline--tRNA ligase of Acinetobacter baumannii (strain ATCC 17978 / DSM 105126 / CIP 53.77 / LMG 1025 / NCDC KC755 / 5377).